The sequence spans 119 residues: MLPAANRMRRSDEFARTFRRGTRRGTRRLVVHAATTDAGEPPRVGFVVSKAVGGAVVRNRVKRRLRAVLMHRVTDLLPGTLVVVRALPPSANATSAELERDVDGSLTSLGLRAKVVPAR.

This sequence belongs to the RnpA family. Consists of a catalytic RNA component (M1 or rnpB) and a protein subunit.

It catalyses the reaction Endonucleolytic cleavage of RNA, removing 5'-extranucleotides from tRNA precursor.. Functionally, RNaseP catalyzes the removal of the 5'-leader sequence from pre-tRNA to produce the mature 5'-terminus. It can also cleave other RNA substrates such as 4.5S RNA. The protein component plays an auxiliary but essential role in vivo by binding to the 5'-leader sequence and broadening the substrate specificity of the ribozyme. The polypeptide is Ribonuclease P protein component (Beutenbergia cavernae (strain ATCC BAA-8 / DSM 12333 / CCUG 43141 / JCM 11478 / NBRC 16432 / NCIMB 13614 / HKI 0122)).